The sequence spans 1418 residues: Ankyrin repeat and fibronectin type-III domain-containing protein 1 (1418 aa).

The disordered stretch occupies residues 119–236 (RDSVCSLPPP…DRGETPSLSE (118 aa)). Residues 144 to 154 (PENTSINLSQC) show a composition bias toward polar residues. Low complexity predominate over residues 171-186 (SASPTSSTPLRTTSTP). The segment covering 223–236 (LRDHDRGETPSLSE) has biased composition (basic and acidic residues). ANK repeat units lie at residues 419–450 (QSSE…ELDL) and 456–485 (EGLT…KESP). The Fibronectin type-III domain occupies 556 to 652 (APLMVRLSVT…LSQPPSAVPS (97 aa)). The tract at residues 893–900 (GLYLGYLK) is highly conserved peptide sequence. Disordered stretches follow at residues 1134 to 1179 (VQKN…EVFL), 1321 to 1343 (LETP…YRQP), and 1361 to 1418 (KTSP…SSTL). The span at 1136 to 1146 (KNDSTSSNTDY) shows a compositional bias: polar residues. The segment covering 1407–1418 (NEQVSEILSSTL) has biased composition (polar residues).

Required for vestibular-related functions. This is Ankyrin repeat and fibronectin type-III domain-containing protein 1 (ankfn1) from Danio rerio (Zebrafish).